Consider the following 226-residue polypeptide: Pyridoxal 5'-phosphate synthase subunit PdxT (226 aa).

60–62 (GES) provides a ligand contact to L-glutamine. Cys92 acts as the Nucleophile in catalysis. L-glutamine contacts are provided by residues Arg121 and 150-151 (IR). Active-site charge relay system residues include His191 and Glu193.

It belongs to the glutaminase PdxT/SNO family. As to quaternary structure, in the presence of PdxS, forms a dodecamer of heterodimers. Only shows activity in the heterodimer.

It carries out the reaction aldehydo-D-ribose 5-phosphate + D-glyceraldehyde 3-phosphate + L-glutamine = pyridoxal 5'-phosphate + L-glutamate + phosphate + 3 H2O + H(+). The enzyme catalyses L-glutamine + H2O = L-glutamate + NH4(+). It participates in cofactor biosynthesis; pyridoxal 5'-phosphate biosynthesis. Functionally, catalyzes the hydrolysis of glutamine to glutamate and ammonia as part of the biosynthesis of pyridoxal 5'-phosphate. The resulting ammonia molecule is channeled to the active site of PdxS. The sequence is that of Pyridoxal 5'-phosphate synthase subunit PdxT from Nocardia farcinica (strain IFM 10152).